Here is a 256-residue protein sequence, read N- to C-terminus: tRNA (guanine-N(1)-)-methyltransferase (256 aa).

Residues Gly117 and 137–142 (LGDFVL) contribute to the S-adenosyl-L-methionine site.

It belongs to the RNA methyltransferase TrmD family. In terms of assembly, homodimer.

It is found in the cytoplasm. It catalyses the reaction guanosine(37) in tRNA + S-adenosyl-L-methionine = N(1)-methylguanosine(37) in tRNA + S-adenosyl-L-homocysteine + H(+). In terms of biological role, specifically methylates guanosine-37 in various tRNAs. This is tRNA (guanine-N(1)-)-methyltransferase from Methylibium petroleiphilum (strain ATCC BAA-1232 / LMG 22953 / PM1).